The following is a 366-amino-acid chain: Purple acid phosphatase 3 (366 aa).

The first 32 residues, 1–32 (MTYIYRDTKITTKSTIPFLIFFLFCFSNLSMA), serve as a signal peptide directing secretion. Aspartate 81 contributes to the Fe cation binding site. A glycan (N-linked (GlcNAc...) asparagine) is linked at asparagine 89. Fe cation contacts are provided by aspartate 114 and tyrosine 117. Residue aspartate 114 participates in Zn(2+) binding. 2 residues coordinate Zn(2+): asparagine 152 and histidine 246. The active-site Proton donor is histidine 255. Residue histidine 281 coordinates Zn(2+). 281–283 (HDH) contacts substrate. A Fe cation-binding site is contributed by histidine 283.

Belongs to the metallophosphoesterase superfamily. Purple acid phosphatase family. In terms of assembly, homodimer. Requires Fe cation as cofactor. Zn(2+) serves as cofactor. In terms of tissue distribution, expressed in stems, leaves, flowers and siliques.

The protein localises to the secreted. The catalysed reaction is a phosphate monoester + H2O = an alcohol + phosphate. The chain is Purple acid phosphatase 3 (PAP3) from Arabidopsis thaliana (Mouse-ear cress).